The following is a 610-amino-acid chain: Glutamine--fructose-6-phosphate aminotransferase [isomerizing] (610 aa).

Cys2 (nucleophile; for GATase activity) is an active-site residue. The Glutamine amidotransferase type-2 domain occupies 2–219; the sequence is CGIVGATSER…EGDVADINRT (218 aa). 2 consecutive SIS domains span residues 287-427 and 459-600; these read AADI…YRGM and LAQD…VDQP. Residue Lys605 is the For Fru-6P isomerization activity of the active site.

As to quaternary structure, homodimer.

The protein localises to the cytoplasm. The enzyme catalyses D-fructose 6-phosphate + L-glutamine = D-glucosamine 6-phosphate + L-glutamate. Catalyzes the first step in hexosamine metabolism, converting fructose-6P into glucosamine-6P using glutamine as a nitrogen source. The sequence is that of Glutamine--fructose-6-phosphate aminotransferase [isomerizing] from Idiomarina loihiensis (strain ATCC BAA-735 / DSM 15497 / L2-TR).